A 248-amino-acid chain; its full sequence is Aliphatic sulfonates import ATP-binding protein SsuB 2 (248 aa).

An ABC transporter domain is found at 14 to 230; sequence VRVESLVRSF…DHGHRRFGEI (217 aa). An ATP-binding site is contributed by 46–53; the sequence is GRSGSGKS.

The protein belongs to the ABC transporter superfamily. Aliphatic sulfonates importer (TC 3.A.1.17.2) family. The complex is composed of two ATP-binding proteins (SsuB), two transmembrane proteins (SsuC) and a solute-binding protein (SsuA).

It localises to the cell inner membrane. It catalyses the reaction ATP + H2O + aliphatic sulfonate-[sulfonate-binding protein]Side 1 = ADP + phosphate + aliphatic sulfonateSide 2 + [sulfonate-binding protein]Side 1.. Part of the ABC transporter complex SsuABC involved in aliphatic sulfonates import. Responsible for energy coupling to the transport system. This Mesorhizobium japonicum (strain LMG 29417 / CECT 9101 / MAFF 303099) (Mesorhizobium loti (strain MAFF 303099)) protein is Aliphatic sulfonates import ATP-binding protein SsuB 2.